The chain runs to 594 residues: U3 small nucleolar RNA-associated protein 18 (594 aa).

Disordered regions lie at residues 48-128 (EQEM…WIDS) and 176-200 (KWVDDESDSELDDEEDDEEEGSNNV). Acidic residues-rich tracts occupy residues 49 to 72 (QEMDVEDQEDEGSESDNSEEDEAQ), 102 to 128 (TMDVDDEDDSSSDDYSEDSEEAAWIDS), and 180 to 196 (DESDSELDDEEDDEEEG). An interaction with UTP21 region spans residues 101–190 (DTMDVDDEDD…ESDSELDDEE (90 aa)). S182 and S184 each carry phosphoserine. 5 WD repeats span residues 246 to 285 (PSHSAIQSLSFHPSKPLLLTGGYDKTLRIYHIDGKTNHLV), 290 to 334 (LVGS…LTHS), 463 to 504 (GTTT…TSST), 513 to 554 (QLTT…VFSN), and 560 to 593 (TPLGKVTSVAFSPSGGLLAVGNEQGKVRLWKLNH).

The protein belongs to the WD repeat UTP18 family. Interacts with snoRNA U3. Interacts with MPP10, UTP21 and UTP25. Component of the ribosomal small subunit (SSU) processome composed of at least 40 protein subunits and snoRNA U3.

The protein localises to the nucleus. Its subcellular location is the nucleolus. In terms of biological role, involved in nucleolar processing of pre-18S ribosomal RNA and ribosome assembly. This is U3 small nucleolar RNA-associated protein 18 (UTP18) from Saccharomyces cerevisiae (strain ATCC 204508 / S288c) (Baker's yeast).